Reading from the N-terminus, the 184-residue chain is Ribosome maturation factor RimM (184 aa).

Positions 101-174 (PDEYYDHQLV…RVVIADRPGL (74 aa)) constitute a PRC barrel domain.

The protein belongs to the RimM family. Binds ribosomal protein uS19.

It is found in the cytoplasm. An accessory protein needed during the final step in the assembly of 30S ribosomal subunit, possibly for assembly of the head region. Essential for efficient processing of 16S rRNA. May be needed both before and after RbfA during the maturation of 16S rRNA. It has affinity for free ribosomal 30S subunits but not for 70S ribosomes. This is Ribosome maturation factor RimM from Nocardioides sp. (strain ATCC BAA-499 / JS614).